The following is a 448-amino-acid chain: Ribosomal protein uS12 methylthiotransferase RimO (448 aa).

Residues 16–126 (PRISFVSLGC…VVAAVHEAVP (111 aa)) form the MTTase N-terminal domain. Positions 25, 61, 90, 157, 161, and 164 each coordinate [4Fe-4S] cluster. Residues 143–380 (LTPRHYAYLK…MEAQSHVSLR (238 aa)) form the Radical SAM core domain. A TRAM domain is found at 383 to 448 (RAKVGKRLSV…DAYDLHGIAV (66 aa)).

Belongs to the methylthiotransferase family. RimO subfamily. [4Fe-4S] cluster is required as a cofactor.

Its subcellular location is the cytoplasm. It carries out the reaction L-aspartate(89)-[ribosomal protein uS12]-hydrogen + (sulfur carrier)-SH + AH2 + 2 S-adenosyl-L-methionine = 3-methylsulfanyl-L-aspartate(89)-[ribosomal protein uS12]-hydrogen + (sulfur carrier)-H + 5'-deoxyadenosine + L-methionine + A + S-adenosyl-L-homocysteine + 2 H(+). Catalyzes the methylthiolation of an aspartic acid residue of ribosomal protein uS12. This Methylorubrum extorquens (strain PA1) (Methylobacterium extorquens) protein is Ribosomal protein uS12 methylthiotransferase RimO.